The primary structure comprises 468 residues: Membrane-associated tyrosine- and threonine-specific cdc2-inhibitory kinase wee-1.1 (468 aa).

A compositionally biased stretch (basic and acidic residues) spans 25–42; it reads SKDEPNKLNTSRKLEVTT. The tract at residues 25–63 is disordered; that stretch reads SKDEPNKLNTSRKLEVTTKKNQSNNKKRPPPINKARKSL. Positions 49–61 are enriched in basic residues; sequence NKKRPPPINKARK. The region spanning 106–357 is the Protein kinase domain; sequence FNFDKNLGKG…SELMKNHVVK (252 aa). Residues 112–120 and K135 each bind ATP; that span reads LGKGSFGEV. Catalysis depends on D224, which acts as the Proton acceptor. Residues N229 and D242 each contribute to the Mg(2+) site. The interval 425-453 is disordered; sequence EDEYEVFSPPRTPVKKSRYQQTMPEVSPP.

Belongs to the protein kinase superfamily. Ser/Thr protein kinase family. WEE1 subfamily. In terms of tissue distribution, in the 12-13-cell embryo, expressed in the E blastomere. In the 16-cell embryo, expressed in the eight AB cells.

The protein resides in the nucleus. The enzyme catalyses L-seryl-[protein] + ATP = O-phospho-L-seryl-[protein] + ADP + H(+). It carries out the reaction L-threonyl-[protein] + ATP = O-phospho-L-threonyl-[protein] + ADP + H(+). Its function is as follows. Acts as a negative regulator of entry into mitosis (G2 to M transition) by phosphorylation of the CDK1 kinase. The protein is Membrane-associated tyrosine- and threonine-specific cdc2-inhibitory kinase wee-1.1 (wee-1.1) of Caenorhabditis elegans.